A 155-amino-acid chain; its full sequence is MSKVTERVEAICQPVVESLGFELVDVEYVKEGPDYYLRIAIDKPGGIDISDCALASEKISEVMDKEDPITEAYFLDVSSPGAERPLKKEKDYENAIGKHVYVKLYEPVEGDKEWIGELKEVSKDTITLSAKIKTRTKVIEIDRKRIAKIRLAVIL.

It belongs to the RimP family.

The protein resides in the cytoplasm. Functionally, required for maturation of 30S ribosomal subunits. The protein is Ribosome maturation factor RimP of Macrococcus caseolyticus (strain JCSC5402) (Macrococcoides caseolyticum).